The following is a 61-amino-acid chain: Peroxidase 1 (61 aa).

Residues 1–32 are disordered; it reads DNTAKEKDSPANLSLRTCAAGDNAEQPLDPSR. A glycan (N-linked (GlcNAc...) asparagine) is linked at asparagine 12. Ca(2+) contacts are provided by aspartate 29, serine 31, and aspartate 36.

The protein belongs to the peroxidase family. Classical plant (class III) peroxidase subfamily. The cofactor is Ca(2+). Requires heme b as cofactor.

It localises to the secreted. The enzyme catalyses 2 a phenolic donor + H2O2 = 2 a phenolic radical donor + 2 H2O. Functionally, removal of H(2)O(2), oxidation of toxic reductants, biosynthesis and degradation of lignin, suberization, auxin catabolism, response to environmental stresses such as wounding, pathogen attack and oxidative stress. These functions might be dependent on each isozyme/isoform in each plant tissue. In Vitis rotundifolia (Muscadine grape), this protein is Peroxidase 1.